Consider the following 495-residue polypeptide: Membrane-bound lytic murein transglycosylase F (495 aa).

The N-terminal stretch at Met-1 to Ser-30 is a signal peptide. Positions Glu-31–Val-270 are non-LT domain. An LT domain region spans residues Ser-272–Lys-495. The active site involves Glu-315.

This sequence in the N-terminal section; belongs to the bacterial solute-binding protein 3 family. The protein in the C-terminal section; belongs to the transglycosylase Slt family.

It localises to the cell outer membrane. It carries out the reaction Exolytic cleavage of the (1-&gt;4)-beta-glycosidic linkage between N-acetylmuramic acid (MurNAc) and N-acetylglucosamine (GlcNAc) residues in peptidoglycan, from either the reducing or the non-reducing ends of the peptidoglycan chains, with concomitant formation of a 1,6-anhydrobond in the MurNAc residue.. Its function is as follows. Murein-degrading enzyme that degrades murein glycan strands and insoluble, high-molecular weight murein sacculi, with the concomitant formation of a 1,6-anhydromuramoyl product. Lytic transglycosylases (LTs) play an integral role in the metabolism of the peptidoglycan (PG) sacculus. Their lytic action creates space within the PG sacculus to allow for its expansion as well as for the insertion of various structures such as secretion systems and flagella. The chain is Membrane-bound lytic murein transglycosylase F from Aliivibrio fischeri (strain ATCC 700601 / ES114) (Vibrio fischeri).